We begin with the raw amino-acid sequence, 311 residues long: Probable cobalamin biosynthesis protein CobD (311 aa).

4 consecutive transmembrane segments (helical) span residues 53–73 (FIFG…AIYG), 76–96 (ILIN…FLIS), 157–177 (DSII…AFIY), and 288–308 (FSID…YVIF).

Belongs to the CobD/CbiB family.

The protein resides in the cell membrane. It functions in the pathway cofactor biosynthesis; adenosylcobalamin biosynthesis. In terms of biological role, converts cobyric acid to cobinamide by the addition of aminopropanol on the F carboxylic group. The protein is Probable cobalamin biosynthesis protein CobD of Methanococcus aeolicus (strain ATCC BAA-1280 / DSM 17508 / OCM 812 / Nankai-3).